Here is a 499-residue protein sequence, read N- to C-terminus: Increased recombination centers protein 15 (499 aa).

Residue 47–56 (DQRASLGGAY) coordinates FAD.

The protein belongs to the class-I pyridine nucleotide-disulfide oxidoreductase family.

Its subcellular location is the cytoplasm. In Saccharomyces cerevisiae (strain ATCC 204508 / S288c) (Baker's yeast), this protein is Increased recombination centers protein 15 (IRC15).